The chain runs to 446 residues: Argininosuccinate synthase (446 aa).

ATP-binding positions include 17–25 (AFSGGLDTS) and alanine 43. Residue tyrosine 99 participates in L-citrulline binding. Residues glycine 129 and threonine 131 each contribute to the ATP site. The L-aspartate site is built by threonine 131, asparagine 135, and aspartate 136. L-citrulline is bound at residue asparagine 135. An ATP-binding site is contributed by aspartate 136. Arginine 139 and serine 192 together coordinate L-citrulline. Residue aspartate 194 coordinates ATP. Positions 201, 203, and 280 each coordinate L-citrulline.

Belongs to the argininosuccinate synthase family. Type 2 subfamily. Homotetramer.

It is found in the cytoplasm. The catalysed reaction is L-citrulline + L-aspartate + ATP = 2-(N(omega)-L-arginino)succinate + AMP + diphosphate + H(+). The protein operates within amino-acid biosynthesis; L-arginine biosynthesis; L-arginine from L-ornithine and carbamoyl phosphate: step 2/3. This chain is Argininosuccinate synthase, found in Variovorax paradoxus (strain S110).